The sequence spans 298 residues: N-acetylmuramic acid 6-phosphate etherase (298 aa).

The region spanning 55 to 218 is the SIS domain; sequence IHAQVSGGGR…STGLMIKSGK (164 aa). Glutamate 83 serves as the catalytic Proton donor. Glutamate 114 is a catalytic residue.

This sequence belongs to the GCKR-like family. MurNAc-6-P etherase subfamily. As to quaternary structure, homodimer.

It carries out the reaction N-acetyl-D-muramate 6-phosphate + H2O = N-acetyl-D-glucosamine 6-phosphate + (R)-lactate. It functions in the pathway amino-sugar metabolism; 1,6-anhydro-N-acetylmuramate degradation. Its pathway is amino-sugar metabolism; N-acetylmuramate degradation. It participates in cell wall biogenesis; peptidoglycan recycling. Its function is as follows. Specifically catalyzes the cleavage of the D-lactyl ether substituent of MurNAc 6-phosphate, producing GlcNAc 6-phosphate and D-lactate. Together with AnmK, is also required for the utilization of anhydro-N-acetylmuramic acid (anhMurNAc) either imported from the medium or derived from its own cell wall murein, and thus plays a role in cell wall recycling. This chain is N-acetylmuramic acid 6-phosphate etherase, found in Escherichia coli O8 (strain IAI1).